A 2193-amino-acid chain; its full sequence is Genome polyprotein (2193 aa).

A disordered region spans residues 1–23 (MGSQVSTQRSGSHENSNSASEGS). Gly-2 is lipidated: N-myristoyl glycine; by host. The Cytoplasmic segment spans residues 2–1503 (GSQVSTQRSG…HLNRAVLVMQ (1502 aa)). The segment at 566–588 (GDPIADMIDQTVNNQVNRSLTAL) is amphipathic alpha-helix. Catalysis depends on for protease 2A activity residues His-883 and Asp-901. 2 residues coordinate Zn(2+): Cys-918 and Cys-920. Cys-972 serves as the catalytic For protease 2A activity. Residues Cys-978 and His-980 each contribute to the Zn(2+) site. The interval 1112-1184 (SASWLKKFND…EQSAASQEDL (73 aa)) is membrane-binding. Residues 1112–1250 (SASWLKKFND…SPGTGKSLAT (139 aa)) are oligomerization. Residues 1133-1137 (SSKIS) form an RNA-binding region. One can recognise an SF3 helicase domain in the interval 1216-1374 (EKRMNNYMQF…YKTDLGRLDA (159 aa)). Residue 1240–1247 (GSPGTGKS) coordinates ATP. The Zn(2+) site is built by Cys-1381, Cys-1392, and Cys-1397. A C4-type; degenerate zinc finger spans residues 1381 to 1397 (CTENNTANFKRCSPLVC). Residues 1424–1431 (EYNNRSAI) form an RNA-binding region. The segment at 1435–1440 (IEALFQ) is oligomerization. Residues 1504-1519 (SIATVVAVVSLVYVIY) lie within the membrane without spanning it. Over 1520–2193 (KLFAGFQGAY…NLRRNWLELF (674 aa)) the chain is Cytoplasmic. At Tyr-1529 the chain carries O-(5'-phospho-RNA)-tyrosine. The region spanning 1549–1727 (GPSLDFALSL…FCAGLKRGYF (179 aa)) is the Peptidase C3 domain. Catalysis depends on for protease 3C activity residues His-1588, Glu-1619, and Cys-1695. The RdRp catalytic domain maps to 1958-2074 (GSLFAFDYSG…SYPFPIDCSE (117 aa)). Residues Asp-1964 and Asp-2060 each contribute to the Mg(2+) site.

The protein belongs to the picornaviruses polyprotein family. Interacts with capsid protein VP1 and capsid protein VP3 to form heterotrimeric protomers. As to quaternary structure, interacts with capsid protein VP0, and capsid protein VP3 to form heterotrimeric protomers. Five protomers subsequently associate to form pentamers which serve as building blocks for the capsid. Interacts with capsid protein VP2, capsid protein VP3 and capsid protein VP4 following cleavage of capsid protein VP0. In terms of assembly, interacts with capsid protein VP1 and capsid protein VP3 in the mature capsid. Interacts with capsid protein VP0 and capsid protein VP1 to form heterotrimeric protomers. Five protomers subsequently associate to form pentamers which serve as building blocks for the capsid. Interacts with capsid protein VP4 in the mature capsid. Interacts with protein 2C; this interaction may be important for virion morphogenesis. As to quaternary structure, interacts with capsid protein VP1 and capsid protein VP3. In terms of assembly, homodimer. Homohexamer; forms a hexameric ring structure with 6-fold symmetry characteristic of AAA+ ATPases. Interacts (via N-terminus) with host RTN3 (via reticulon domain); this interaction is important for viral replication. Interacts with capsid protein VP3; this interaction may be important for virion morphogenesis. As to quaternary structure, interacts with protein 3CD. In terms of assembly, homodimer. Interacts with host GBF1. Interacts (via GOLD domain) with host ACBD3 (via GOLD domain); this interaction allows the formation of a viral protein 3A/ACBD3 heterotetramer with a 2:2 stoichiometry, which will stimulate the recruitment of host PI4KB in order to synthesize PI4P at the viral RNA replication sites. Interacts with RNA-directed RNA polymerase. As to quaternary structure, interacts with host IFIH1/MDA5; this interaction inhibits host IFIH1. In terms of assembly, protein 3CD: Interacts with protein 3AB and with RNA-directed RNA polymerase. Interacts with Viral protein genome-linked and with protein 3CD. It depends on Mg(2+) as a cofactor. Post-translationally, specific enzymatic cleavages in vivo by the viral proteases yield processing intermediates and the mature proteins. In terms of processing, myristoylation is required for the formation of pentamers during virus assembly. Further assembly of 12 pentamers and a molecule of genomic RNA generates the provirion. During virion maturation, immature virions are rendered infectious following cleavage of VP0 into VP4 and VP2. This maturation seems to be an autocatalytic event triggered by the presence of RNA in the capsid and it is followed by a conformational change infectious virion. Post-translationally, myristoylation is required during RNA encapsidation and formation of the mature virus particle. In terms of processing, VPg is uridylylated by the polymerase into VPg-pUpU. This acts as a nucleotide-peptide primer for the genomic RNA replication.

It is found in the virion. It localises to the host cytoplasm. The protein resides in the host cytoplasmic vesicle membrane. The protein localises to the host nucleus. The enzyme catalyses a ribonucleoside 5'-triphosphate + H2O = a ribonucleoside 5'-diphosphate + phosphate + H(+). The catalysed reaction is Selective cleavage of Tyr-|-Gly bond in the picornavirus polyprotein.. It carries out the reaction RNA(n) + a ribonucleoside 5'-triphosphate = RNA(n+1) + diphosphate. It catalyses the reaction Selective cleavage of Gln-|-Gly bond in the poliovirus polyprotein. In other picornavirus reactions Glu may be substituted for Gln, and Ser or Thr for Gly.. With respect to regulation, replication or transcription is subject to high level of random mutations by the nucleotide analog ribavirin. In terms of biological role, forms an icosahedral capsid of pseudo T=3 symmetry with capsid proteins VP2 and VP3. The capsid is 300 Angstroms in diameter, composed of 60 copies of each capsid protein and enclosing the viral positive strand RNA genome. Capsid protein VP1 mainly forms the vertices of the capsid. Capsid protein VP1 interacts with host cell receptor to provide virion attachment to target host cells. This attachment induces virion internalization. After binding to its receptor, the capsid undergoes conformational changes. Capsid protein VP1 N-terminus (that contains an amphipathic alpha-helix) and capsid protein VP4 are externalized. Together, they shape a pore in the host membrane through which viral genome is translocated to host cell cytoplasm. Functionally, forms an icosahedral capsid of pseudo T=3 symmetry with capsid proteins VP2 and VP3. The capsid is 300 Angstroms in diameter, composed of 60 copies of each capsid protein and enclosing the viral positive strand RNA genome. Its function is as follows. Lies on the inner surface of the capsid shell. After binding to the host receptor, the capsid undergoes conformational changes. Capsid protein VP4 is released, Capsid protein VP1 N-terminus is externalized, and together, they shape a pore in the host membrane through which the viral genome is translocated into the host cell cytoplasm. Component of immature procapsids, which is cleaved into capsid proteins VP4 and VP2 after maturation. Allows the capsid to remain inactive before the maturation step. In terms of biological role, cysteine protease that cleaves viral polyprotein and specific host proteins. It is responsible for the autocatalytic cleavage between the P1 and P2 regions, which is the first cleavage occurring in the polyprotein. Also cleaves the host translation initiation factor EIF4G1, in order to shut down the capped cellular mRNA translation. Inhibits the host nucleus-cytoplasm protein and RNA trafficking by cleaving host members of the nuclear pores. Counteracts stress granule formation probably by antagonizing its assembly or promoting its dissassembly. Cleaves and inhibits host IFIH1/MDA5, thereby inhibiting the type-I IFN production and the establishment of the antiviral state. Cleaves and inhibits host MAVS, thereby inhibiting the type-I IFN production and the establishment of the antiviral state. Functionally, plays an essential role in the virus replication cycle by acting as a viroporin. Creates a pore in the host endoplasmic reticulum and as a consequence releases Ca2+ in the cytoplasm of infected cell. In turn, high levels of cytoplasmic calcium may trigger membrane trafficking and transport of viral ER-associated proteins to viroplasms, sites of viral genome replication. Its function is as follows. Induces and associates with structural rearrangements of intracellular membranes. Displays RNA-binding, nucleotide binding and NTPase activities. May play a role in virion morphogenesis and viral RNA encapsidation by interacting with the capsid protein VP3. Localizes the viral replication complex to the surface of membranous vesicles. Together with protein 3CD binds the Cis-Active RNA Element (CRE) which is involved in RNA synthesis initiation. Acts as a cofactor to stimulate the activity of 3D polymerase, maybe through a nucleid acid chaperone activity. In terms of biological role, localizes the viral replication complex to the surface of membranous vesicles. It inhibits host cell endoplasmic reticulum-to-Golgi apparatus transport and causes the disassembly of the Golgi complex, possibly through GBF1 interaction. This would result in depletion of MHC, trail receptors and IFN receptors at the host cell surface. Plays an essential role in viral RNA replication by recruiting ACBD3 and PI4KB at the viral replication sites, thereby allowing the formation of the rearranged membranous structures where viral replication takes place. Functionally, acts as a primer for viral RNA replication and remains covalently bound to viral genomic RNA. VPg is uridylylated prior to priming replication into VPg-pUpU. The oriI viral genomic sequence may act as a template for this. The VPg-pUpU is then used as primer on the genomic RNA poly(A) by the RNA-dependent RNA polymerase to replicate the viral genome. During genome replication, the VPg-RNA linkage is removed by the host TDP2, thereby accelerating replication. During the late stage of the replication cycle, host TDP2 is excluded from sites of viral RNA synthesis and encapsidation, allowing for the generation of progeny virions. Its function is as follows. Involved in the viral replication complex and viral polypeptide maturation. It exhibits protease activity with a specificity and catalytic efficiency that is different from protease 3C. Protein 3CD lacks polymerase activity. Protein 3CD binds to the 5'UTR of the viral genome. Major viral protease that mediates proteolytic processing of the polyprotein. Cleaves host EIF5B, contributing to host translation shutoff. Also cleaves host PABPC1, contributing to host translation shutoff. Binds and inhibits host IFIH1/MDA5, thereby inhibiting the type-I IFN production and the establishment of the antiviral state. Cleaves host MAP3K7/TAK1, resulting in inhibition of TRAF6-triggered NF-kappa-B induction. Cleaves host NLRP1, triggers host N-glycine-mediated degradation of the autoinhibitory NLRP1 N-terminal fragment. In terms of biological role, replicates the viral genomic RNA on the surface of intracellular membranes. May form linear arrays of subunits that propagate along a strong head-to-tail interaction called interface-I. Covalently attaches UMP to a tyrosine of VPg, which is used to prime RNA synthesis. The positive stranded RNA genome is first replicated at virus induced membranous vesicles, creating a dsRNA genomic replication form. This dsRNA is then used as template to synthesize positive stranded RNA genomes. ss(+)RNA genomes are either translated, replicated or encapsidated. This chain is Genome polyprotein, found in Homo sapiens (Human).